Here is a 416-residue protein sequence, read N- to C-terminus: UDP-N-acetylglucosamine 1-carboxyvinyltransferase (416 aa).

22 to 23 (KN) lines the phosphoenolpyruvate pocket. R91 contributes to the UDP-N-acetyl-alpha-D-glucosamine binding site. The Proton donor role is filled by C115. Residue C115 is modified to 2-(S-cysteinyl)pyruvic acid O-phosphothioketal. UDP-N-acetyl-alpha-D-glucosamine-binding positions include 120–124 (RPIDL), D305, and I327.

It belongs to the EPSP synthase family. MurA subfamily.

It localises to the cytoplasm. The enzyme catalyses phosphoenolpyruvate + UDP-N-acetyl-alpha-D-glucosamine = UDP-N-acetyl-3-O-(1-carboxyvinyl)-alpha-D-glucosamine + phosphate. It functions in the pathway cell wall biogenesis; peptidoglycan biosynthesis. In terms of biological role, cell wall formation. Adds enolpyruvyl to UDP-N-acetylglucosamine. The sequence is that of UDP-N-acetylglucosamine 1-carboxyvinyltransferase from Buchnera aphidicola subsp. Acyrthosiphon pisum (strain Tuc7).